Consider the following 119-residue polypeptide: NADH-quinone oxidoreductase subunit A (119 aa).

3 helical membrane passes run 9 to 29 (IFLF…LGYI), 63 to 83 (LVAI…PWAV), and 88 to 108 (IGAL…VGFI).

This sequence belongs to the complex I subunit 3 family. In terms of assembly, NDH-1 is composed of 14 different subunits. Subunits NuoA, H, J, K, L, M, N constitute the membrane sector of the complex.

Its subcellular location is the cell inner membrane. The catalysed reaction is a quinone + NADH + 5 H(+)(in) = a quinol + NAD(+) + 4 H(+)(out). Functionally, NDH-1 shuttles electrons from NADH, via FMN and iron-sulfur (Fe-S) centers, to quinones in the respiratory chain. The immediate electron acceptor for the enzyme in this species is believed to be ubiquinone. Couples the redox reaction to proton translocation (for every two electrons transferred, four hydrogen ions are translocated across the cytoplasmic membrane), and thus conserves the redox energy in a proton gradient. The protein is NADH-quinone oxidoreductase subunit A of Albidiferax ferrireducens (strain ATCC BAA-621 / DSM 15236 / T118) (Rhodoferax ferrireducens).